The chain runs to 260 residues: Proline-rich protein 33 (260 aa).

The interval 29–132 (GVQTVSPRPE…KVAPKPSRSG (104 aa)) is disordered. A compositionally biased stretch (pro residues) spans 73 to 83 (GPSPYSPPPAA).

The protein is Proline-rich protein 33 (Prr33) of Mus musculus (Mouse).